The primary structure comprises 217 residues: RNA chaperone ProQ (217 aa).

Residues glutamate 105–serine 166 form a disordered region. Over residues lysine 121 to proline 131 the composition is skewed to basic residues. Basic and acidic residues predominate over residues arginine 132–histidine 162.

The protein belongs to the ProQ family.

It localises to the cytoplasm. Functionally, RNA chaperone with significant RNA binding, RNA strand exchange and RNA duplexing activities. May regulate ProP activity through an RNA-based, post-transcriptional mechanism. This chain is RNA chaperone ProQ, found in Escherichia coli O8 (strain IAI1).